Consider the following 149-residue polypeptide: Nucleoside diphosphate kinase 1 (149 aa).

ATP-binding residues include Lys10, Phe58, Arg86, Thr92, Arg103, and Asn113. Residue His116 is the Pros-phosphohistidine intermediate of the active site.

Belongs to the NDK family. Mg(2+) is required as a cofactor.

The catalysed reaction is a 2'-deoxyribonucleoside 5'-diphosphate + ATP = a 2'-deoxyribonucleoside 5'-triphosphate + ADP. The enzyme catalyses a ribonucleoside 5'-diphosphate + ATP = a ribonucleoside 5'-triphosphate + ADP. Functionally, major role in the synthesis of nucleoside triphosphates other than ATP. The ATP gamma phosphate is transferred to the NDP beta phosphate via a ping-pong mechanism, using a phosphorylated active-site intermediate. This NDK is microtubule-associated. The protein is Nucleoside diphosphate kinase 1 (NDPK1) of Pisum sativum (Garden pea).